The following is a 370-amino-acid chain: Protein-tyrosine sulfotransferase 1 (370 aa).

The Cytoplasmic portion of the chain corresponds to 1-8 (MVGKLKQN). The helical; Signal-anchor for type II membrane protein transmembrane segment at 9–25 (LLLACLVISSVTVFYLG) threads the bilayer. Residues 26–370 (QHAMECHHRI…KEKPQTEQVE (345 aa)) are Lumenal-facing. Residue asparagine 60 is glycosylated (N-linked (GlcNAc...) asparagine). A 3'-phosphoadenylyl sulfate-binding site is contributed by 79 to 83 (RSGTT). Cysteine 97 and cysteine 157 are disulfide-bonded. Glutamate 100 functions as the Proton donor/acceptor in the catalytic mechanism. Positions 102–106 (RVIPR) are interaction with peptide substrate. Residues arginine 184, serine 192, and arginine 196 each coordinate 3'-phosphoadenylyl sulfate. The cysteines at positions 226 and 234 are disulfide-linked. Residue tyrosine 239 coordinates 3'-phosphoadenylyl sulfate. N-linked (GlcNAc...) asparagine glycosylation is present at asparagine 262. 3'-phosphoadenylyl sulfate contacts are provided by residues 286–295 (STDQVIKPVN) and lysine 301.

It belongs to the protein sulfotransferase family. In terms of assembly, homodimer. Can also form heterodimers with TPST2. In terms of processing, N-glycosylated.

The protein resides in the golgi apparatus membrane. It carries out the reaction L-tyrosyl-[protein] + 3'-phosphoadenylyl sulfate = O-sulfo-L-tyrosine-[protein] + adenosine 3',5'-bisphosphate + H(+). In terms of biological role, catalyzes the O-sulfation of tyrosine residues within acidic motifs of polypeptides, using 3'-phosphoadenylyl sulfate (PAPS) as cosubstrate. The protein is Protein-tyrosine sulfotransferase 1 (Tpst1) of Rattus norvegicus (Rat).